A 107-amino-acid chain; its full sequence is uncharacterized protein (107 aa).

This is an uncharacterized protein from Methanocaldococcus jannaschii (strain ATCC 43067 / DSM 2661 / JAL-1 / JCM 10045 / NBRC 100440) (Methanococcus jannaschii).